The sequence spans 163 residues: NADH-quinone oxidoreductase subunit I (163 aa).

4Fe-4S ferredoxin-type domains are found at residues 53–83 (LRRY…IEAG) and 94–123 (VRYD…EGPN). Positions 63, 66, 69, 73, 103, 106, 109, and 113 each coordinate [4Fe-4S] cluster.

This sequence belongs to the complex I 23 kDa subunit family. As to quaternary structure, NDH-1 is composed of 14 different subunits. Subunits NuoA, H, J, K, L, M, N constitute the membrane sector of the complex. [4Fe-4S] cluster is required as a cofactor.

Its subcellular location is the cell inner membrane. The enzyme catalyses a quinone + NADH + 5 H(+)(in) = a quinol + NAD(+) + 4 H(+)(out). In terms of biological role, NDH-1 shuttles electrons from NADH, via FMN and iron-sulfur (Fe-S) centers, to quinones in the respiratory chain. The immediate electron acceptor for the enzyme in this species is believed to be ubiquinone. Couples the redox reaction to proton translocation (for every two electrons transferred, four hydrogen ions are translocated across the cytoplasmic membrane), and thus conserves the redox energy in a proton gradient. The chain is NADH-quinone oxidoreductase subunit I from Brucella abortus (strain S19).